A 523-amino-acid polypeptide reads, in one-letter code: Sensory neuron membrane protein 1 (523 aa).

Topologically, residues methionine 1–alanine 11 are cytoplasmic. Residues isoleucine 12–leucine 32 traverse the membrane as a helical segment. Residues lysine 33 to valine 458 are Extracellular-facing. Asparagine 229 is a glycosylation site (N-linked (GlcNAc...) asparagine). Intrachain disulfides connect cysteine 268-cysteine 333, cysteine 297-cysteine 352, and cysteine 335-cysteine 341. Asparagine 440 carries an N-linked (GlcNAc...) asparagine glycan. Residues glycine 459–phenylalanine 479 form a helical membrane-spanning segment. Residues histidine 480–isoleucine 523 are Cytoplasmic-facing.

This sequence belongs to the CD36 family.

The protein resides in the cell membrane. In terms of biological role, plays an olfactory role that is not restricted to pheromone sensitivity. The polypeptide is Sensory neuron membrane protein 1 (Helicoverpa assulta (Oriental tobacco budworm)).